The primary structure comprises 861 residues: Actin-binding LIM protein 1 (861 aa).

4 consecutive LIM zinc-binding domains span residues 97–156 (IHCH…MYGT), 156–216 (TRCH…MSSS), 224–283 (SNCA…LFGV), and 283–343 (VKCE…TKTE). Ser-216 carries the post-translational modification Phosphoserine. A disordered region spans residues 374–414 (LQLLSPPCLTNSNKNPRQPTRTSSESIYSRPGSSIPGSPGH). The span at 381-400 (CLTNSNKNPRQPTRTSSESI) shows a compositional bias: polar residues. A compositionally biased stretch (low complexity) spans 404–413 (PGSSIPGSPG). The residue at position 411 (Ser-411) is a Phosphoserine. Residues Tyr-417 and Tyr-440 each carry the phosphotyrosine modification. 2 disordered regions span residues 459–590 (EDKQ…PTYA) and 634–682 (FPAA…ELLR). Ser-466, Ser-470, and Ser-475 each carry phosphoserine. Over residues 467–478 (LGESPRTLSPTP) the composition is skewed to polar residues. The residue at position 477 (Thr-477) is a Phosphothreonine. At Ser-479 the chain carries Phosphoserine. Tyr-483 carries the phosphotyrosine modification. The span at 493–518 (RSTSQGSINSPVYSRHSYTPTTSRSP) shows a compositional bias: polar residues. Ser-496, Ser-499, and Ser-502 each carry phosphoserine. Over residues 536–546 (PLRTSSFSSTH) the composition is skewed to low complexity. 2 positions are modified to phosphoserine: Ser-582 and Ser-671. Residues 673–723 (REEDEEELLRRRQLQEEQLMKLNSGLGQLILKEEMEKESRERASLASRYDS) are a coiled coil. Residue Lys-704 forms a Glycyl lysine isopeptide (Lys-Gly) (interchain with G-Cter in SUMO2) linkage. The interval 713 to 748 (ERASLASRYDSPLHSASHAPSSKTSSLPGYGKNGLH) is disordered. Residues Ser-723, Ser-738, Ser-760, and Ser-789 each carry the phosphoserine modification. Positions 724-738 (PLHSASHAPSSKTSS) are enriched in low complexity. One can recognise an HP domain in the interval 793 to 861 (MLEPKIFPYE…NDMKKKAKLF (69 aa)).

In terms of assembly, binds F-actin. Interacts with ABRA. Isoform 1 is detected in adult retina, where it is highly expressed in the ganglion layer. Detected in rod inner segment. Isoform 2 is highly expressed in adult retina, brain, kidney and heart. Isoform 3 is highly expressed in adult retina, brain, kidney, liver, skeletal muscle, spleen and heart. Detected in embryonic retina, brain, spinal cord, peripheral sensory ganglia and thymus.

Its subcellular location is the cytoplasm. It is found in the cytoskeleton. In terms of biological role, may act as scaffold protein. May play a role in the development of the retina. Has been suggested to play a role in axon guidance. The chain is Actin-binding LIM protein 1 (Ablim1) from Mus musculus (Mouse).